Reading from the N-terminus, the 283-residue chain is Protein/nucleic acid deglycase HchA (283 aa).

Zn(2+)-binding residues include His86, Glu91, and His123. The active-site Nucleophile is the Cys185.

This sequence belongs to the peptidase C56 family. HchA subfamily. Homodimer.

It is found in the cytoplasm. It carries out the reaction N(omega)-(1-hydroxy-2-oxopropyl)-L-arginyl-[protein] + H2O = lactate + L-arginyl-[protein] + H(+). The catalysed reaction is N(6)-(1-hydroxy-2-oxopropyl)-L-lysyl-[protein] + H2O = lactate + L-lysyl-[protein] + H(+). It catalyses the reaction S-(1-hydroxy-2-oxopropyl)-L-cysteinyl-[protein] + H2O = lactate + L-cysteinyl-[protein] + H(+). The enzyme catalyses N(omega)-(1-hydroxy-2-oxoethyl)-L-arginyl-[protein] + H2O = L-arginyl-[protein] + glycolate + H(+). It carries out the reaction N(6)-(1-hydroxy-2-oxoethyl)-L-lysyl-[protein] + H2O = glycolate + L-lysyl-[protein] + H(+). The catalysed reaction is S-(1-hydroxy-2-oxoethyl)-L-cysteinyl-[protein] + H2O = glycolate + L-cysteinyl-[protein] + H(+). It catalyses the reaction N(2)-(1-hydroxy-2-oxopropyl)-dGTP + H2O = lactate + dGTP + H(+). The enzyme catalyses N(2)-(1-hydroxy-2-oxopropyl)-GTP + H2O = lactate + GTP + H(+). It carries out the reaction N(2)-(1-hydroxy-2-oxopropyl)-GDP + H2O = lactate + GDP + H(+). The catalysed reaction is N(2)-(1-hydroxy-2-oxopropyl)-GMP + H2O = lactate + GMP + H(+). It catalyses the reaction N(2)-(1-hydroxy-2-oxoethyl)-dGTP + H2O = dGTP + glycolate + H(+). The enzyme catalyses N(2)-(1-hydroxy-2-oxoethyl)-GTP + H2O = glycolate + GTP + H(+). It carries out the reaction N(2)-(1-hydroxy-2-oxoethyl)-GDP + H2O = glycolate + GDP + H(+). The catalysed reaction is N(2)-(1-hydroxy-2-oxoethyl)-GMP + H2O = glycolate + GMP + H(+). It catalyses the reaction an N(2)-(1-hydroxy-2-oxopropyl)-guanosine in RNA + H2O = a guanosine in RNA + lactate + H(+). The enzyme catalyses an N(2)-(1-hydroxy-2-oxopropyl)-2'-deoxyguanosine in DNA + H2O = a 2'-deoxyguanosine in DNA + lactate + H(+). It carries out the reaction an N(2)-(1-hydroxy-2-oxoethyl)-guanosine in RNA + H2O = a guanosine in RNA + glycolate + H(+). The catalysed reaction is an N(2)-(1-hydroxy-2-oxoethyl)-2'-deoxyguanosine in DNA + H2O = a 2'-deoxyguanosine in DNA + glycolate + H(+). Its function is as follows. Protein and nucleotide deglycase that catalyzes the deglycation of the Maillard adducts formed between amino groups of proteins or nucleotides and reactive carbonyl groups of glyoxals. Thus, functions as a protein deglycase that repairs methylglyoxal- and glyoxal-glycated proteins, and releases repaired proteins and lactate or glycolate, respectively. Deglycates cysteine, arginine and lysine residues in proteins, and thus reactivates these proteins by reversing glycation by glyoxals. Acts on early glycation intermediates (hemithioacetals and aminocarbinols), preventing the formation of Schiff bases and advanced glycation endproducts (AGE). Also functions as a nucleotide deglycase able to repair glycated guanine in the free nucleotide pool (GTP, GDP, GMP, dGTP) and in DNA and RNA. Is thus involved in a major nucleotide repair system named guanine glycation repair (GG repair), dedicated to reversing methylglyoxal and glyoxal damage via nucleotide sanitization and direct nucleic acid repair. Plays an important role in protecting cells from carbonyl stress. The chain is Protein/nucleic acid deglycase HchA from Shigella flexneri.